Here is a 189-residue protein sequence, read N- to C-terminus: Glycerol-3-phosphate acyltransferase (189 aa).

Transmembrane regions (helical) follow at residues 1–21 (MFWL…AILL), 51–71 (LAVL…LIAH), 77–97 (LQQQ…PLYF), 111–131 (MLLG…ALTF), and 151–171 (LLAW…LLIV).

The protein belongs to the PlsY family. In terms of assembly, probably interacts with PlsX.

The protein localises to the cell inner membrane. It carries out the reaction an acyl phosphate + sn-glycerol 3-phosphate = a 1-acyl-sn-glycero-3-phosphate + phosphate. It functions in the pathway lipid metabolism; phospholipid metabolism. Functionally, catalyzes the transfer of an acyl group from acyl-phosphate (acyl-PO(4)) to glycerol-3-phosphate (G3P) to form lysophosphatidic acid (LPA). This enzyme utilizes acyl-phosphate as fatty acyl donor, but not acyl-CoA or acyl-ACP. This Pseudomonas fluorescens (strain ATCC BAA-477 / NRRL B-23932 / Pf-5) protein is Glycerol-3-phosphate acyltransferase.